Here is a 615-residue protein sequence, read N- to C-terminus: Protein PSK SIMULATOR 2 (615 aa).

Gly2 carries the N-myristoyl glycine lipid modification. Basic and acidic residues predominate over residues 16-27 (KKLRSNDDDKSR). Disordered stretches follow at residues 16 to 59 (KKLR…KSSK) and 506 to 529 (AHGVKLQETNHVSPPNNRTISNTQ). Positions 42 to 52 (SDSYYSDNYGG) are enriched in low complexity. Polar residues predominate over residues 512 to 529 (QETNHVSPPNNRTISNTQ).

It is found in the nucleus. Its function is as follows. Promotes seedling growth probably via the regulation of phytosulfokine (PSK) signaling; PSK are peptide phytohormones acting as growth factors. Involved in PSK-induced root growth. Together with PSI1 and PSI3, required during vegetative growth and reproduction. The sequence is that of Protein PSK SIMULATOR 2 from Arabidopsis thaliana (Mouse-ear cress).